We begin with the raw amino-acid sequence, 84 residues long: Small ribosomal subunit protein bS16 (84 aa).

The protein belongs to the bacterial ribosomal protein bS16 family.

In Paraburkholderia phytofirmans (strain DSM 17436 / LMG 22146 / PsJN) (Burkholderia phytofirmans), this protein is Small ribosomal subunit protein bS16.